A 156-amino-acid chain; its full sequence is Ribosome maturation factor RimP (156 aa).

Belongs to the RimP family.

It localises to the cytoplasm. Its function is as follows. Required for maturation of 30S ribosomal subunits. This chain is Ribosome maturation factor RimP, found in Exiguobacterium sp. (strain ATCC BAA-1283 / AT1b).